Consider the following 77-residue polypeptide: Cell division topological specificity factor (77 aa).

Belongs to the MinE family.

Its function is as follows. Prevents the cell division inhibition by proteins MinC and MinD at internal division sites while permitting inhibition at polar sites. This ensures cell division at the proper site by restricting the formation of a division septum at the midpoint of the long axis of the cell. In Nautilia profundicola (strain ATCC BAA-1463 / DSM 18972 / AmH), this protein is Cell division topological specificity factor.